The sequence spans 166 residues: Cilia- and flagella-associated protein 68 (166 aa).

Mn stretches follow at residues 98-109 and 139-149; these read TTYDANYSRKKP and KSTYMTNYSEP.

It belongs to the CFAP68 family. Microtubule inner protein component of sperm flagellar doublet microtubules.

It localises to the cytoplasm. Its subcellular location is the cytoskeleton. The protein localises to the cilium axoneme. It is found in the flagellum axoneme. The protein resides in the nucleus. It localises to the cell projection. Its subcellular location is the cilium. Its function is as follows. Microtubule inner protein (MIP) part of the dynein-decorated doublet microtubules (DMTs) in cilia axoneme, which is required for motile cilia beating. In Mus musculus (Mouse), this protein is Cilia- and flagella-associated protein 68 (Cfap68).